The primary structure comprises 69 residues: Defensin-like protein 166 (69 aa).

The signal sequence occupies residues 1–15; it reads MIIVIIFLVIYFNNQ. 4 disulfides stabilise this stretch: Cys-19–Cys-68, Cys-24–Cys-44, Cys-29–Cys-62, and Cys-33–Cys-64.

It belongs to the DEFL family.

It is found in the secreted. This Arabidopsis thaliana (Mouse-ear cress) protein is Defensin-like protein 166.